The chain runs to 132 residues: Small ribosomal subunit protein uS8c (132 aa).

The protein belongs to the universal ribosomal protein uS8 family. Part of the 30S ribosomal subunit.

The protein resides in the plastid. It localises to the chloroplast. In terms of biological role, one of the primary rRNA binding proteins, it binds directly to 16S rRNA central domain where it helps coordinate assembly of the platform of the 30S subunit. This chain is Small ribosomal subunit protein uS8c (rps8), found in Illicium oligandrum (Star anise).